The primary structure comprises 287 residues: Hydroxyethylthiazole kinase (287 aa).

Met-50 provides a ligand contact to substrate. Arg-126 and Ser-185 together coordinate ATP. Gly-212 provides a ligand contact to substrate.

Belongs to the Thz kinase family. The cofactor is Mg(2+).

The enzyme catalyses 5-(2-hydroxyethyl)-4-methylthiazole + ATP = 4-methyl-5-(2-phosphooxyethyl)-thiazole + ADP + H(+). It participates in cofactor biosynthesis; thiamine diphosphate biosynthesis; 4-methyl-5-(2-phosphoethyl)-thiazole from 5-(2-hydroxyethyl)-4-methylthiazole: step 1/1. Functionally, catalyzes the phosphorylation of the hydroxyl group of 4-methyl-5-beta-hydroxyethylthiazole (THZ). In Methanobrevibacter smithii (strain ATCC 35061 / DSM 861 / OCM 144 / PS), this protein is Hydroxyethylthiazole kinase.